The following is a 201-amino-acid chain: Large ribosomal subunit protein bL25 (201 aa).

The protein belongs to the bacterial ribosomal protein bL25 family. CTC subfamily. As to quaternary structure, part of the 50S ribosomal subunit; part of the 5S rRNA/L5/L18/L25 subcomplex. Contacts the 5S rRNA. Binds to the 5S rRNA independently of L5 and L18.

Its function is as follows. This is one of the proteins that binds to the 5S RNA in the ribosome where it forms part of the central protuberance. The chain is Large ribosomal subunit protein bL25 from Burkholderia cenocepacia (strain HI2424).